A 223-amino-acid polypeptide reads, in one-letter code: RNA pyrophosphohydrolase (223 aa).

One can recognise a Nudix hydrolase domain in the interval 6–149 (GFRPNVGIIL…KRGVYEMALT (144 aa)). The Nudix box signature appears at 38 to 59 (GGIDRGESPEQAMFRELHEEVG). Positions 175–223 (ERHMPDGGAPAGLDLPPGGSFDPHPDITSASDDPSPPPHNKAPFLPSQR) are disordered. The segment covering 180–193 (DGGAPAGLDLPPGG) has biased composition (low complexity).

The protein belongs to the Nudix hydrolase family. RppH subfamily. It depends on a divalent metal cation as a cofactor.

Accelerates the degradation of transcripts by removing pyrophosphate from the 5'-end of triphosphorylated RNA, leading to a more labile monophosphorylated state that can stimulate subsequent ribonuclease cleavage. In Variovorax paradoxus (strain S110), this protein is RNA pyrophosphohydrolase.